Reading from the N-terminus, the 386-residue chain is Glucose-1-phosphate adenylyltransferase (386 aa).

Residues Tyr-100, Gly-165, 180-181, and Ser-191 each bind alpha-D-glucose 1-phosphate; that span reads EK.

Belongs to the bacterial/plant glucose-1-phosphate adenylyltransferase family. As to quaternary structure, homotetramer.

It carries out the reaction alpha-D-glucose 1-phosphate + ATP + H(+) = ADP-alpha-D-glucose + diphosphate. It participates in glycan biosynthesis; glycogen biosynthesis. In terms of biological role, involved in the biosynthesis of ADP-glucose, a building block required for the elongation reactions to produce glycogen. Catalyzes the reaction between ATP and alpha-D-glucose 1-phosphate (G1P) to produce pyrophosphate and ADP-Glc. The sequence is that of Glucose-1-phosphate adenylyltransferase from Clostridium botulinum (strain Eklund 17B / Type B).